The chain runs to 320 residues: tRNA dimethylallyltransferase (320 aa).

Glycine 5–serine 12 contacts ATP. Threonine 7–serine 12 is a binding site for substrate. The interaction with substrate tRNA stretch occupies residues aspartate 30–glutamine 33.

Belongs to the IPP transferase family. In terms of assembly, monomer. Mg(2+) serves as cofactor.

The enzyme catalyses adenosine(37) in tRNA + dimethylallyl diphosphate = N(6)-dimethylallyladenosine(37) in tRNA + diphosphate. Catalyzes the transfer of a dimethylallyl group onto the adenine at position 37 in tRNAs that read codons beginning with uridine, leading to the formation of N6-(dimethylallyl)adenosine (i(6)A). In Heliobacterium modesticaldum (strain ATCC 51547 / Ice1), this protein is tRNA dimethylallyltransferase.